Here is a 260-residue protein sequence, read N- to C-terminus: Cytosolic Fe-S cluster assembly factor Nubp2 homolog 1 (260 aa).

Position 14–21 (14–21 (GKGGVGKS)) interacts with ATP. [4Fe-4S] cluster is bound by residues cysteine 188 and cysteine 191.

It belongs to the Mrp/NBP35 ATP-binding proteins family. NUBP2/CFD1 subfamily. As to quaternary structure, heterotetramer of 2 Nubp1 and 2 Nubp2 chains. [4Fe-4S] cluster serves as cofactor.

It is found in the cytoplasm. Component of the cytosolic iron-sulfur (Fe/S) protein assembly (CIA) machinery. Required for maturation of extramitochondrial Fe-S proteins. The Nubp1-Nubp2 heterotetramer forms a Fe-S scaffold complex, mediating the de novo assembly of an Fe-S cluster and its transfer to target apoproteins. This is Cytosolic Fe-S cluster assembly factor Nubp2 homolog 1 from Drosophila yakuba (Fruit fly).